Reading from the N-terminus, the 246-residue chain is UDP-N-acetyl-D-mannosaminuronic acid transferase (246 aa).

This sequence belongs to the glycosyltransferase 26 family.

The catalysed reaction is UDP-N-acetyl-alpha-D-mannosaminouronate + N-acetyl-alpha-D-glucosaminyl-di-trans,octa-cis-undecaprenyl diphosphate = beta-D-ManNAcA-(1-&gt;4)-alpha-D-GlcNAc-di-trans,octa-cis-undecaprenyl diphosphate + UDP + H(+). Its pathway is bacterial outer membrane biogenesis; enterobacterial common antigen biosynthesis. Catalyzes the synthesis of Und-PP-GlcNAc-ManNAcA (Lipid II), the second lipid-linked intermediate involved in enterobacterial common antigen (ECA) synthesis. The polypeptide is UDP-N-acetyl-D-mannosaminuronic acid transferase (Escherichia fergusonii (strain ATCC 35469 / DSM 13698 / CCUG 18766 / IAM 14443 / JCM 21226 / LMG 7866 / NBRC 102419 / NCTC 12128 / CDC 0568-73)).